Reading from the N-terminus, the 119-residue chain is Autophagy-related protein 8c (119 aa).

G117 is lipidated: Phosphatidylethanolamine amidated glycine. Positions 118-119 (LV) are cleaved as a propeptide — removed in mature form.

Belongs to the ATG8 family. In terms of assembly, interacts with ATG4. Interacts with NBR1. In terms of processing, the C-terminal 2 residues are removed by ATG4 to expose Gly-117 at the C-terminus. This Gly-117 forms then a thioester bond with the 'Cys-558' of ATG7 (E1-like activating enzyme) before being transferred to the 'Cys-258' of ATG3 (the specific E2 conjugating enzyme), in order to be finally amidated with phosphatidylethanolamine. This lipid modification anchors ATG8 to autophagosomes. In terms of tissue distribution, constitutively expressed.

Its subcellular location is the cytoplasmic vesicle. It localises to the autophagosome membrane. The protein localises to the vacuole membrane. It is found in the cytoplasm. The protein resides in the cytoskeleton. Its function is as follows. Ubiquitin-like modifier involved in autophagosomes formation. May mediate the delivery of the autophagosomes to the vacuole via the microtubule cytoskeleton. The chain is Autophagy-related protein 8c (ATG8C) from Arabidopsis thaliana (Mouse-ear cress).